Here is a 168-residue protein sequence, read N- to C-terminus: MRLPSILVVAASTLFLHYGYTSASPGADAVLTGAVSLGFLQLVGADQSVIEQPRFLRDGKIAEGDNEERVNAQKEAAAKVLDQVFKTKSLSPLDKLEKTSNLAVIRHVAAMVDDKVDKIFAFADAVGMGRASMLKMLKGDKQFTDAERLKTVKRYVKFLIKKEQNNKA.

The signal sequence occupies residues 1–23 (MRLPSILVVAASTLFLHYGYTSA). The RxLR-dEER motif lies at 54–69 (RFLRDGKIAEGDNEER).

Belongs to the RxLR effector family.

Its subcellular location is the secreted. It is found in the host cell. In terms of biological role, effector that is involved in host plant infection. Contributes to virulence during the early infection stage, by inhibiting plant defense responses induced by both PAMP-triggered immunity (PTI) and effector-triggered immunity (ETI). The chain is RxLR effector protein CRE8 from Phytophthora infestans (strain T30-4) (Potato late blight agent).